A 359-amino-acid polypeptide reads, in one-letter code: tRNA-specific 2-thiouridylase MnmA (359 aa).

ATP-binding positions include 7-14 and methionine 33; that span reads AMSGGVDS. Cysteine 101 functions as the Nucleophile in the catalytic mechanism. Cysteine 101 and cysteine 198 are oxidised to a cystine. Residue glycine 125 coordinates ATP. An interaction with tRNA region spans residues 148–150; sequence KDQ. Cysteine 198 (cysteine persulfide intermediate) is an active-site residue.

It belongs to the MnmA/TRMU family.

The protein resides in the cytoplasm. It carries out the reaction S-sulfanyl-L-cysteinyl-[protein] + uridine(34) in tRNA + AH2 + ATP = 2-thiouridine(34) in tRNA + L-cysteinyl-[protein] + A + AMP + diphosphate + H(+). Catalyzes the 2-thiolation of uridine at the wobble position (U34) of tRNA, leading to the formation of s(2)U34. In Chloroflexus aggregans (strain MD-66 / DSM 9485), this protein is tRNA-specific 2-thiouridylase MnmA.